The sequence spans 151 residues: Transcription factor ATOH7 (151 aa).

One can recognise a bHLH domain in the interval 39-91; the sequence is KRRLAANARERRRMQGLNTAFDRLRKVVPQWGQDKKLSKYETLQMALSYIMAL.

The protein resides in the nucleus. Its subcellular location is the perikaryon. It is found in the cell projection. It localises to the axon. Its function is as follows. Transcription factor that binds to DNA at the consensus sequence 5'-CAG[GC]TG-3'. Positively regulates the determination of retinal ganglion cell fate and formation of the optic nerve and retino-hypothalamic tract. Required for retinal circadian rhythm photoentrainment. Plays a role in brainstem auditory signaling and binaural processing. During retinal neurogenesis, activates its own transcription, as well as the transcription of CHRNB3 and BRN3. In Gallus gallus (Chicken), this protein is Transcription factor ATOH7.